Here is a 265-residue protein sequence, read N- to C-terminus: tRNA pseudouridine synthase A (265 aa).

Asp55 serves as the catalytic Nucleophile. A substrate-binding site is contributed by Tyr113.

This sequence belongs to the tRNA pseudouridine synthase TruA family. As to quaternary structure, homodimer.

It catalyses the reaction uridine(38/39/40) in tRNA = pseudouridine(38/39/40) in tRNA. Its function is as follows. Formation of pseudouridine at positions 38, 39 and 40 in the anticodon stem and loop of transfer RNAs. This chain is tRNA pseudouridine synthase A, found in Levilactobacillus brevis (strain ATCC 367 / BCRC 12310 / CIP 105137 / JCM 1170 / LMG 11437 / NCIMB 947 / NCTC 947) (Lactobacillus brevis).